We begin with the raw amino-acid sequence, 300 residues long: ATP-dependent (S)-NAD(P)H-hydrate dehydratase (300 aa).

A YjeF C-terminal domain is found at 14–293; the sequence is LLALFKTVVP…NQIPSVFQTE (280 aa). Residues G114 and 167 to 173 each bind (6S)-NADPHX; that span reads NVMEFQR. ATP contacts are provided by residues 198–202 and 219–228; these read KGAND and GSGRRCGGQG. D229 lines the (6S)-NADPHX pocket.

This sequence belongs to the NnrD/CARKD family. It depends on Mg(2+) as a cofactor.

It carries out the reaction (6S)-NADHX + ATP = ADP + phosphate + NADH + H(+). The enzyme catalyses (6S)-NADPHX + ATP = ADP + phosphate + NADPH + H(+). Catalyzes the dehydration of the S-form of NAD(P)HX at the expense of ATP, which is converted to ADP. Together with NAD(P)HX epimerase, which catalyzes the epimerization of the S- and R-forms, the enzyme allows the repair of both epimers of NAD(P)HX, a damaged form of NAD(P)H that is a result of enzymatic or heat-dependent hydration. The protein is ATP-dependent (S)-NAD(P)H-hydrate dehydratase of Drosophila melanogaster (Fruit fly).